Reading from the N-terminus, the 879-residue chain is DNA mismatch repair protein MutS (879 aa).

629–636 (GPNMAGKS) is a binding site for ATP.

Belongs to the DNA mismatch repair MutS family.

Functionally, this protein is involved in the repair of mismatches in DNA. It is possible that it carries out the mismatch recognition step. This protein has a weak ATPase activity. The protein is DNA mismatch repair protein MutS of Ruegeria sp. (strain TM1040) (Silicibacter sp.).